Consider the following 524-residue polypeptide: Vang-like protein 1 (524 aa).

Low complexity predominate over residues 1-15; sequence MDTESTYSGYSYYSS. A disordered region spans residues 1-85; it reads MDTESTYSGY…TTAITGTSEH (85 aa). The Cytoplasmic portion of the chain corresponds to 1-117; it reads MDTESTYSGY…KRYLGLTVAS (117 aa). A compositionally biased stretch (polar residues) spans 73 to 85; the sequence is GETTTAITGTSEH. 2 positions are modified to phosphoserine: S86 and S88. The helical transmembrane segment at 118–138 threads the bilayer; sequence FLGLLVFLTPIAFILLPPILW. Topologically, residues 139-151 are extracellular; sequence RDELEPCGTICEG. A helical transmembrane segment spans residues 152 to 172; sequence LFISMAFKLLILLIGTWALFF. Residues 173-182 are Cytoplasmic-facing; that stretch reads RKRRADMPRV. The chain crosses the membrane as a helical span at residues 183–203; it reads FVFRALLLVLIFLFVVSYWLF. The Extracellular portion of the chain corresponds to 204-222; that stretch reads YGVRILDSRDRNYQGIVQY. The chain crosses the membrane as a helical span at residues 223-243; that stretch reads AVSLVDALLFIHYLAIVLLEL. Residues 244 to 524 are Cytoplasmic-facing; it reads RQLQPMFTLQ…VLRLQSETSV (281 aa).

This sequence belongs to the Vang family. As to quaternary structure, heterodimer with VANGL2. Interacts through its C-terminal region with the N-terminal half of DVL1, DVL2 and DVL3. The PDZ domain of DVL1, DVL2 and DVL3 is required for the interaction. As to expression, according to PubMed:11956595, ubiquitously expressed. According to PubMed:12011995, expressed specifically in testis and ovary.

Its subcellular location is the cell membrane. The chain is Vang-like protein 1 (VANGL1) from Homo sapiens (Human).